The following is a 248-amino-acid chain: Homeobox protein Hox-A4 (248 aa).

The interval 23–107 (YQQSGYIPNP…PDGGAGANAS (85 aa)) is disordered. Basic and acidic residues predominate over residues 35 to 51 (YYERPKDTGFPHHDEPS). Positions 128–133 (VYPWMK) match the Antp-type hexapeptide motif. A DNA-binding region (homeobox) is located at residues 149–208 (PKRSRTAYTRQQALELEKEFHFNRYLTRRRRVEIAHTMCLSERQVKIWFQNRRMKWKKEH). The tract at residues 207–248 (EHKLPNTKIRSSSSASSSASGAQQQQIKTGQQLVPTPCTAGL) is disordered. The segment covering 217–238 (SSSSASSSASGAQQQQIKTGQQ) has biased composition (low complexity).

This sequence belongs to the Antp homeobox family. Deformed subfamily.

Its subcellular location is the nucleus. Functionally, sequence-specific transcription factor which is part of a developmental regulatory system that provides cells with specific positional identities on the anterior-posterior axis. The sequence is that of Homeobox protein Hox-A4 (hoxa4) from Morone saxatilis (Striped bass).